We begin with the raw amino-acid sequence, 320 residues long: Lipoyl synthase (320 aa).

Positions 1–29 (MIGKLVRDLKIPDQRHPEKAHRPDNDQPR) are enriched in basic and acidic residues. Residues 1–32 (MIGKLVRDLKIPDQRHPEKAHRPDNDQPRKPS) are disordered. Positions 60, 65, 71, 86, 90, 93, and 300 each coordinate [4Fe-4S] cluster. Residues 71-289 (CWGQGHATMM…EKAAYGKGFL (219 aa)) form the Radical SAM core domain.

This sequence belongs to the radical SAM superfamily. Lipoyl synthase family. [4Fe-4S] cluster serves as cofactor.

Its subcellular location is the cytoplasm. It catalyses the reaction [[Fe-S] cluster scaffold protein carrying a second [4Fe-4S](2+) cluster] + N(6)-octanoyl-L-lysyl-[protein] + 2 oxidized [2Fe-2S]-[ferredoxin] + 2 S-adenosyl-L-methionine + 4 H(+) = [[Fe-S] cluster scaffold protein] + N(6)-[(R)-dihydrolipoyl]-L-lysyl-[protein] + 4 Fe(3+) + 2 hydrogen sulfide + 2 5'-deoxyadenosine + 2 L-methionine + 2 reduced [2Fe-2S]-[ferredoxin]. Its pathway is protein modification; protein lipoylation via endogenous pathway; protein N(6)-(lipoyl)lysine from octanoyl-[acyl-carrier-protein]: step 2/2. Catalyzes the radical-mediated insertion of two sulfur atoms into the C-6 and C-8 positions of the octanoyl moiety bound to the lipoyl domains of lipoate-dependent enzymes, thereby converting the octanoylated domains into lipoylated derivatives. The polypeptide is Lipoyl synthase (Cereibacter sphaeroides (strain ATCC 17025 / ATH 2.4.3) (Rhodobacter sphaeroides)).